Reading from the N-terminus, the 110-residue chain is Large ribosomal subunit protein uL22 (110 aa).

The protein belongs to the universal ribosomal protein uL22 family. As to quaternary structure, part of the 50S ribosomal subunit.

This protein binds specifically to 23S rRNA; its binding is stimulated by other ribosomal proteins, e.g. L4, L17, and L20. It is important during the early stages of 50S assembly. It makes multiple contacts with different domains of the 23S rRNA in the assembled 50S subunit and ribosome. Its function is as follows. The globular domain of the protein is located near the polypeptide exit tunnel on the outside of the subunit, while an extended beta-hairpin is found that lines the wall of the exit tunnel in the center of the 70S ribosome. The chain is Large ribosomal subunit protein uL22 from Nitrosococcus oceani (strain ATCC 19707 / BCRC 17464 / JCM 30415 / NCIMB 11848 / C-107).